Consider the following 179-residue polypeptide: NADH dehydrogenase [ubiquinone] 1 beta subcomplex subunit 9 (179 aa).

Ala-2 is modified (N-acetylalanine). Phosphoserine is present on Ser-85. The tract at residues 139–160 is disordered; the sequence is QLQEETPVGGPRTEALPPARKQ.

This sequence belongs to the complex I LYR family. Mammalian complex I is composed of 45 different subunits.

The protein localises to the mitochondrion inner membrane. Accessory subunit of the mitochondrial membrane respiratory chain NADH dehydrogenase (Complex I), that is believed to be not involved in catalysis. Complex I functions in the transfer of electrons from NADH to the respiratory chain. The immediate electron acceptor for the enzyme is believed to be ubiquinone. This is NADH dehydrogenase [ubiquinone] 1 beta subcomplex subunit 9 (NDUFB9) from Bos taurus (Bovine).